The following is a 359-amino-acid chain: UDP-N-acetylglucosamine--N-acetylmuramyl-(pentapeptide) pyrophosphoryl-undecaprenol N-acetylglucosamine transferase (359 aa).

Residues 13-15, N125, R161, S193, I241, and Q285 each bind UDP-N-acetyl-alpha-D-glucosamine; that span reads TAG.

This sequence belongs to the glycosyltransferase 28 family. MurG subfamily.

The protein resides in the cell membrane. It carries out the reaction di-trans,octa-cis-undecaprenyl diphospho-N-acetyl-alpha-D-muramoyl-L-alanyl-D-glutamyl-meso-2,6-diaminopimeloyl-D-alanyl-D-alanine + UDP-N-acetyl-alpha-D-glucosamine = di-trans,octa-cis-undecaprenyl diphospho-[N-acetyl-alpha-D-glucosaminyl-(1-&gt;4)]-N-acetyl-alpha-D-muramoyl-L-alanyl-D-glutamyl-meso-2,6-diaminopimeloyl-D-alanyl-D-alanine + UDP + H(+). It functions in the pathway cell wall biogenesis; peptidoglycan biosynthesis. Cell wall formation. Catalyzes the transfer of a GlcNAc subunit on undecaprenyl-pyrophosphoryl-MurNAc-pentapeptide (lipid intermediate I) to form undecaprenyl-pyrophosphoryl-MurNAc-(pentapeptide)GlcNAc (lipid intermediate II). The protein is UDP-N-acetylglucosamine--N-acetylmuramyl-(pentapeptide) pyrophosphoryl-undecaprenol N-acetylglucosamine transferase of Corynebacterium diphtheriae (strain ATCC 700971 / NCTC 13129 / Biotype gravis).